A 29-amino-acid polypeptide reads, in one-letter code: Small toxic protein ZorP (29 aa).

Residues 10–27 (VLIAVLELLVALLRLIDL) traverse the membrane as a helical segment.

The protein resides in the membrane. In terms of biological role, toxic component of a type I toxin-antitoxin (TA) system. Overexpression leads to cell stasis and a decrease in colony-forming units. Probably repressed by cognate small RNA orzP. Base pairing occurs between 18 bases in the 5' UTR of zorP mRNA and the 5' end of OrzP sRNA. The chain is Small toxic protein ZorP from Escherichia coli O157:H7.